The primary structure comprises 208 residues: MKVVEVKHPLVRHKIGLMREGNISTKRFRELAAEVGSLLTYEATADFETEKVTIDGWNGPVEIEQIKGKKVTVVPILRAGLGMMDGVLEHVPSARISVVGIYRDEETLEPVPYFEKLASDMPSRIALVVDPMLATGGSMISTIDLLKERGCTAIKALVLVAAPEGVAALEKAHPDIELYTASIDDCLNEQGYILPGLGDAGDKIFGTK.

5-phospho-alpha-D-ribose 1-diphosphate contacts are provided by residues Arg78, Arg103, and 130 to 138; that span reads DPMLATGGS. Residues Ile193 and 198 to 200 contribute to the uracil site; that span reads GDA. Asp199 lines the 5-phospho-alpha-D-ribose 1-diphosphate pocket.

It belongs to the UPRTase family. Mg(2+) is required as a cofactor.

It carries out the reaction UMP + diphosphate = 5-phospho-alpha-D-ribose 1-diphosphate + uracil. The protein operates within pyrimidine metabolism; UMP biosynthesis via salvage pathway; UMP from uracil: step 1/1. Allosterically activated by GTP. Functionally, catalyzes the conversion of uracil and 5-phospho-alpha-D-ribose 1-diphosphate (PRPP) to UMP and diphosphate. The polypeptide is Uracil phosphoribosyltransferase (Shewanella halifaxensis (strain HAW-EB4)).